Here is a 252-residue protein sequence, read N- to C-terminus: Triosephosphate isomerase (252 aa).

10 to 12 (NWK) lines the substrate pocket. His96 acts as the Electrophile in catalysis. Glu168 serves as the catalytic Proton acceptor. Residues Gly174, Ser214, and 235–236 (GG) contribute to the substrate site.

Belongs to the triosephosphate isomerase family. In terms of assembly, homodimer.

It localises to the cytoplasm. It carries out the reaction D-glyceraldehyde 3-phosphate = dihydroxyacetone phosphate. It participates in carbohydrate biosynthesis; gluconeogenesis. The protein operates within carbohydrate degradation; glycolysis; D-glyceraldehyde 3-phosphate from glycerone phosphate: step 1/1. Functionally, involved in the gluconeogenesis. Catalyzes stereospecifically the conversion of dihydroxyacetone phosphate (DHAP) to D-glyceraldehyde-3-phosphate (G3P). The sequence is that of Triosephosphate isomerase from Streptococcus pyogenes serotype M18 (strain MGAS8232).